The sequence spans 190 residues: Major intrinsically disordered NOTCH2-binding receptor 1-like (190 aa).

Serine 79 carries the phosphoserine modification. N-linked (GlcNAc...) asparagine glycans are attached at residues asparagine 109 and asparagine 125. A helical transmembrane segment spans residues 169 to 189; sequence GLILLVVISILVTIVTIITFF.

Belongs to the MINAR family. In terms of assembly, interacts with NOTCH2. Highly expressed in the auditory hair cells.

The protein localises to the lysosome membrane. It localises to the endoplasmic reticulum membrane. Functionally, binds cholesterol and may regulate the distribution and homeostasis of cholesterol in hair cells. May play a role in angiogenesis. This chain is Major intrinsically disordered NOTCH2-binding receptor 1-like, found in Homo sapiens (Human).